A 531-amino-acid polypeptide reads, in one-letter code: GMP synthase [glutamine-hydrolyzing] (531 aa).

A Glutamine amidotransferase type-1 domain is found at 20 to 213; the sequence is KILIVDFGSQ…VRKVAGLKGD (194 aa). C97 (nucleophile) is an active-site residue. Catalysis depends on residues H187 and E189. Residues 214 to 406 form the GMPS ATP-PPase domain; sequence WTMRAFREEA…LGLPDVFVGR (193 aa). Residue 241–247 participates in ATP binding; it reads SGGVDSA.

As to quaternary structure, homodimer.

The catalysed reaction is XMP + L-glutamine + ATP + H2O = GMP + L-glutamate + AMP + diphosphate + 2 H(+). The protein operates within purine metabolism; GMP biosynthesis; GMP from XMP (L-Gln route): step 1/1. Catalyzes the synthesis of GMP from XMP. The protein is GMP synthase [glutamine-hydrolyzing] of Afipia carboxidovorans (strain ATCC 49405 / DSM 1227 / KCTC 32145 / OM5) (Oligotropha carboxidovorans).